Consider the following 427-residue polypeptide: Serine--tRNA ligase (427 aa).

231 to 233 is a binding site for L-serine; sequence TAE. 262 to 264 serves as a coordination point for ATP; it reads RSE. E285 is an L-serine binding site. 349-352 serves as a coordination point for ATP; sequence EISS. S385 lines the L-serine pocket.

The protein belongs to the class-II aminoacyl-tRNA synthetase family. Type-1 seryl-tRNA synthetase subfamily. In terms of assembly, homodimer. The tRNA molecule binds across the dimer.

It is found in the cytoplasm. It catalyses the reaction tRNA(Ser) + L-serine + ATP = L-seryl-tRNA(Ser) + AMP + diphosphate + H(+). It carries out the reaction tRNA(Sec) + L-serine + ATP = L-seryl-tRNA(Sec) + AMP + diphosphate + H(+). The protein operates within aminoacyl-tRNA biosynthesis; selenocysteinyl-tRNA(Sec) biosynthesis; L-seryl-tRNA(Sec) from L-serine and tRNA(Sec): step 1/1. Catalyzes the attachment of serine to tRNA(Ser). Is also able to aminoacylate tRNA(Sec) with serine, to form the misacylated tRNA L-seryl-tRNA(Sec), which will be further converted into selenocysteinyl-tRNA(Sec). The protein is Serine--tRNA ligase of Rhizobium etli (strain CIAT 652).